Here is a 126-residue protein sequence, read N- to C-terminus: Holo-[acyl-carrier-protein] synthase (126 aa).

Aspartate 8 and glutamate 50 together coordinate Mg(2+).

It belongs to the P-Pant transferase superfamily. AcpS family. The cofactor is Mg(2+).

It localises to the cytoplasm. The catalysed reaction is apo-[ACP] + CoA = holo-[ACP] + adenosine 3',5'-bisphosphate + H(+). In terms of biological role, transfers the 4'-phosphopantetheine moiety from coenzyme A to a Ser of acyl-carrier-protein. This is Holo-[acyl-carrier-protein] synthase from Micrococcus luteus (strain ATCC 4698 / DSM 20030 / JCM 1464 / CCM 169 / CCUG 5858 / IAM 1056 / NBRC 3333 / NCIMB 9278 / NCTC 2665 / VKM Ac-2230) (Micrococcus lysodeikticus).